The chain runs to 369 residues: MWIKELNLTHYRNYQQASAAFSPGLNVFIGDNAQGKTNFLEAIYFLSVTRSHRTKSDKDLIYFDERDCSISGTLERLSGRVQLEILLSDKGRITKINTLKQAKLSDYIGAMMVVLFAPEDLQLVKGSPSLRRKFMDIDLGQIKPVYLSDLSHYNHVLKQRNAYLKSVHQLDSDFLSVLDEQLVTYGSRVMAHRLAFVQSLAKEANKHHQAISNGLEKLSISYQASVSFEHQQEIYQQFMDQLKTTHQRDFLRKNTGVGPHRDDLIFYINGMNANFASQGQHRSLILSLKMAEVSLMKQLTGDNPILLLDDVMSELDNIRQTKLLEAVKKENVQTFITTTSLKHLSQLPKDISLFKVNKGTIALDSVMID.

30–37 (GDNAQGKT) contacts ATP.

It belongs to the RecF family.

It is found in the cytoplasm. In terms of biological role, the RecF protein is involved in DNA metabolism; it is required for DNA replication and normal SOS inducibility. RecF binds preferentially to single-stranded, linear DNA. It also seems to bind ATP. This Streptococcus equi subsp. zooepidemicus (strain MGCS10565) protein is DNA replication and repair protein RecF.